A 411-amino-acid polypeptide reads, in one-letter code: LL-diaminopimelate aminotransferase (411 aa).

Residues tyrosine 15 and glycine 42 each contribute to the substrate site. Pyridoxal 5'-phosphate contacts are provided by residues tyrosine 72, 108-109, tyrosine 132, asparagine 187, tyrosine 218, and 246-248; these read SK and SFS. Positions 109, 132, and 187 each coordinate substrate. Lysine 249 is modified (N6-(pyridoxal phosphate)lysine). Pyridoxal 5'-phosphate contacts are provided by arginine 257 and asparagine 292. Substrate-binding residues include asparagine 292 and arginine 388.

The protein belongs to the class-I pyridoxal-phosphate-dependent aminotransferase family. LL-diaminopimelate aminotransferase subfamily. Homodimer. The cofactor is pyridoxal 5'-phosphate.

It carries out the reaction (2S,6S)-2,6-diaminopimelate + 2-oxoglutarate = (S)-2,3,4,5-tetrahydrodipicolinate + L-glutamate + H2O + H(+). The protein operates within amino-acid biosynthesis; L-lysine biosynthesis via DAP pathway; LL-2,6-diaminopimelate from (S)-tetrahydrodipicolinate (aminotransferase route): step 1/1. Involved in the synthesis of meso-diaminopimelate (m-DAP or DL-DAP), required for both lysine and peptidoglycan biosynthesis. Catalyzes the direct conversion of tetrahydrodipicolinate to LL-diaminopimelate. The chain is LL-diaminopimelate aminotransferase from Nostoc punctiforme (strain ATCC 29133 / PCC 73102).